The sequence spans 608 residues: Myosin light chain kinase 2, skeletal/cardiac muscle (608 aa).

The tract at residues 1–160 (MATENGAVEL…RGSPAFLHSP (160 aa)) is disordered. Residue Ala2 is modified to N-acetylalanine. Basic and acidic residues-rich tracts occupy residues 31-43 (AAEK…DPEK) and 50-63 (TKQD…KKDA). The segment covering 82 to 91 (GSQGPAGEGG) has biased composition (gly residues). The span at 116–127 (ASEKKPEAEKGP) shows a compositional bias: basic and acidic residues. Phosphoserine is present on residues Ser153, Ser159, and Ser161. Residues 214 to 235 (QKEAGEKAPGQADQAKVQGDTS) form a disordered region. Positions 297-552 (MNSKEALGGG…AAQCLAHPWL (256 aa)) constitute a Protein kinase domain. Residues 303 to 311 (LGGGKFGAV) and Lys326 contribute to the ATP site. The active-site Proton acceptor is Asp418. Phosphothreonine is present on Thr457. Residues 586 to 598 (IAVSAANRFKKIS) are calmodulin-binding.

It belongs to the protein kinase superfamily. CAMK Ser/Thr protein kinase family. May interact with centrin.

It is found in the cytoplasm. The enzyme catalyses L-seryl-[myosin light chain] + ATP = O-phospho-L-seryl-[myosin light chain] + ADP + H(+). The catalysed reaction is L-threonyl-[myosin light chain] + ATP = O-phospho-L-threonyl-[myosin light chain] + ADP + H(+). Functionally, implicated in the level of global muscle contraction and cardiac function. Phosphorylates a specific serine in the N-terminus of a myosin light chain. The protein is Myosin light chain kinase 2, skeletal/cardiac muscle (MYLK2) of Oryctolagus cuniculus (Rabbit).